The following is a 148-amino-acid chain: Transthyretin-like protein 2 (148 aa).

The first 17 residues, 1–17 (MSKYAILGLVLVGTVAS), serve as a signal peptide directing secretion. A glycan (N-linked (GlcNAc...) asparagine) is linked at Asn77.

It belongs to the nematode transthyretin-like family.

It localises to the secreted. The protein is Transthyretin-like protein 2 (ttr-2) of Caenorhabditis elegans.